The sequence spans 129 residues: Large ribosomal subunit protein bL17 (129 aa).

The protein belongs to the bacterial ribosomal protein bL17 family. As to quaternary structure, part of the 50S ribosomal subunit. Contacts protein L32.

The protein is Large ribosomal subunit protein bL17 of Acidovorax ebreus (strain TPSY) (Diaphorobacter sp. (strain TPSY)).